The following is a 553-amino-acid chain: Zinc finger protein 426 (553 aa).

The 72-residue stretch at 40-111 (VSFDDVIVDF…KIVFPEWKIQ (72 aa)) folds into the KRAB domain. C2H2-type zinc fingers lie at residues 222–244 (FECS…QRTH), 277–299 (HRCK…MRTH), 305–327 (YECK…GRTH), 333–355 (YVCN…VRSH), 361–383 (YACK…IRTH), 389–411 (FVCV…LKMH), 417–439 (CECK…MRTH), 445–467 (YTCK…MRIH), 473–495 (YECK…ERTH), 501–525 (YECK…SHTH), and 531–553 (YKCQ…ERIH).

The protein localises to the nucleus. May be involved in transcriptional regulation. The sequence is that of Zinc finger protein 426 (Znf426) from Rattus norvegicus (Rat).